The following is a 424-amino-acid chain: UDP-N-acetylglucosamine 1-carboxyvinyltransferase (424 aa).

Phosphoenolpyruvate is bound at residue 22–23; it reads KN. Arg-95 contributes to the UDP-N-acetyl-alpha-D-glucosamine binding site. The active-site Proton donor is Cys-119. Cys-119 carries the 2-(S-cysteinyl)pyruvic acid O-phosphothioketal modification. UDP-N-acetyl-alpha-D-glucosamine contacts are provided by residues 124–128, Asp-311, and Ile-333; that span reads RPVDQ.

It belongs to the EPSP synthase family. MurA subfamily.

The protein resides in the cytoplasm. The enzyme catalyses phosphoenolpyruvate + UDP-N-acetyl-alpha-D-glucosamine = UDP-N-acetyl-3-O-(1-carboxyvinyl)-alpha-D-glucosamine + phosphate. Its pathway is cell wall biogenesis; peptidoglycan biosynthesis. In terms of biological role, cell wall formation. Adds enolpyruvyl to UDP-N-acetylglucosamine. The protein is UDP-N-acetylglucosamine 1-carboxyvinyltransferase of Polaromonas naphthalenivorans (strain CJ2).